Consider the following 63-residue polypeptide: Adipokinetic prohormone type 1 (63 aa).

The N-terminal stretch at Met1–Ala22 is a signal peptide. Pyrrolidone carboxylic acid is present on Gln23. Position 32 is a threonine amide (Thr32).

The protein belongs to the AKH/HRTH/RPCH family. As to quaternary structure, adipokinetic hormone precursor-related peptide (APRP) can form three type of disulfide-bond dimers: p1 (alpha-alpha), p2 (alpha-beta), and p3 (beta-beta).

It localises to the secreted. In terms of biological role, this hormone, released from cells in the corpora cardiaca, causes release of diglycerides from the fat body and stimulation of muscles to use these diglycerides as an energy source during energy-demanding processes. In Schistocerca gregaria (Desert locust), this protein is Adipokinetic prohormone type 1.